A 1347-amino-acid polypeptide reads, in one-letter code: Protocadherin-11 X-linked (1347 aa).

The first 23 residues, 1–23, serve as a signal peptide directing secretion; the sequence is MDLLSGTYIFAVLLACVVFHSGA. The Extracellular portion of the chain corresponds to 24-812; it reads QEKNYTIREE…VSSPTSDYVK (789 aa). 7 consecutive Cadherin domains span residues 26–139, 140–249, 250–355, 362–466, 467–570, 571–673, and 677–795; these read KNYT…APLF, PATV…HPVF, KETE…VPSI, NPVN…APVF, TQSF…SPVF, THNE…KPVF, and PSNY…APVT. 3 N-linked (GlcNAc...) asparagine glycosylation sites follow: N27, N48, and N54. N-linked (GlcNAc...) asparagine glycosylation is present at N344. N553 carries N-linked (GlcNAc...) asparagine glycosylation. N773 carries N-linked (GlcNAc...) asparagine glycosylation. Residues 813–833 form a helical membrane-spanning segment; sequence ILVAAVAGTITVVVVIFITAV. Topologically, residues 834-1347 are cytoplasmic; that stretch reads VRCRQAPHLK…DSPVMEEHPL (514 aa). 3 disordered regions span residues 1057–1091, 1097–1116, and 1325–1347; these read LPEG…GYPQ, RATP…ESTF, and TFTP…EHPL.

Its subcellular location is the cell membrane. In terms of biological role, potential calcium-dependent cell-adhesion protein. This Pan paniscus (Pygmy chimpanzee) protein is Protocadherin-11 X-linked (PCDH11X).